Consider the following 311-residue polypeptide: Acetyl-coenzyme A carboxylase carboxyl transferase subunit alpha (311 aa).

A CoA carboxyltransferase C-terminal domain is found at 32 to 289; sequence ELNLLEERLR…KSVLEQKLAQ (258 aa).

Belongs to the AccA family. As to quaternary structure, acetyl-CoA carboxylase is a heterohexamer composed of biotin carboxyl carrier protein (AccB), biotin carboxylase (AccC) and two subunits each of ACCase subunit alpha (AccA) and ACCase subunit beta (AccD).

Its subcellular location is the cytoplasm. It carries out the reaction N(6)-carboxybiotinyl-L-lysyl-[protein] + acetyl-CoA = N(6)-biotinyl-L-lysyl-[protein] + malonyl-CoA. The protein operates within lipid metabolism; malonyl-CoA biosynthesis; malonyl-CoA from acetyl-CoA: step 1/1. Its function is as follows. Component of the acetyl coenzyme A carboxylase (ACC) complex. First, biotin carboxylase catalyzes the carboxylation of biotin on its carrier protein (BCCP) and then the CO(2) group is transferred by the carboxyltransferase to acetyl-CoA to form malonyl-CoA. In Exiguobacterium sibiricum (strain DSM 17290 / CCUG 55495 / CIP 109462 / JCM 13490 / 255-15), this protein is Acetyl-coenzyme A carboxylase carboxyl transferase subunit alpha.